The primary structure comprises 145 residues: Peptide methionine sulfoxide reductase MsrB (145 aa).

Positions 6–129 constitute a MsrB domain; that stretch reads KNERLKQLTD…NSAALRFIPV (124 aa). Catalysis depends on C118, which acts as the Nucleophile.

The protein belongs to the MsrB Met sulfoxide reductase family.

The enzyme catalyses L-methionyl-[protein] + [thioredoxin]-disulfide + H2O = L-methionyl-(R)-S-oxide-[protein] + [thioredoxin]-dithiol. This is Peptide methionine sulfoxide reductase MsrB from Listeria welshimeri serovar 6b (strain ATCC 35897 / DSM 20650 / CCUG 15529 / CIP 8149 / NCTC 11857 / SLCC 5334 / V8).